Here is a 179-residue protein sequence, read N- to C-terminus: Large ribosomal subunit protein uL5 (179 aa).

The protein belongs to the universal ribosomal protein uL5 family. In terms of assembly, part of the 50S ribosomal subunit; part of the 5S rRNA/L5/L18/L25 subcomplex. Contacts the 5S rRNA and the P site tRNA. Forms a bridge to the 30S subunit in the 70S ribosome.

This is one of the proteins that bind and probably mediate the attachment of the 5S RNA into the large ribosomal subunit, where it forms part of the central protuberance. In the 70S ribosome it contacts protein S13 of the 30S subunit (bridge B1b), connecting the 2 subunits; this bridge is implicated in subunit movement. Contacts the P site tRNA; the 5S rRNA and some of its associated proteins might help stabilize positioning of ribosome-bound tRNAs. This is Large ribosomal subunit protein uL5 from Hamiltonella defensa subsp. Acyrthosiphon pisum (strain 5AT).